The following is a 155-amino-acid chain: MPHPLLPDLETLATKVAASKGFALCGIQLLTHMSPMTLEVQIRHSSGADVSLDDCAGFSGVLGDALEASTLLTDAYVLEISSPGIGDQLSSDRDFETFRGFPVEVHHRDKDDSEQRLEGLLLERDADTLQINIRGRIKRIARDCVIGVRLTSPGS.

This sequence belongs to the RimP family.

The protein localises to the cytoplasm. Its function is as follows. Required for maturation of 30S ribosomal subunits. This Synechococcus sp. (strain CC9605) protein is Ribosome maturation factor RimP.